A 144-amino-acid polypeptide reads, in one-letter code: Large ribosomal subunit protein uL11 (144 aa).

It belongs to the universal ribosomal protein uL11 family. In terms of assembly, part of the ribosomal stalk of the 50S ribosomal subunit. Interacts with L10 and the large rRNA to form the base of the stalk. L10 forms an elongated spine to which L12 dimers bind in a sequential fashion forming a multimeric L10(L12)X complex. Post-translationally, one or more lysine residues are methylated.

Functionally, forms part of the ribosomal stalk which helps the ribosome interact with GTP-bound translation factors. The sequence is that of Large ribosomal subunit protein uL11 from Parafrankia sp. (strain EAN1pec).